A 246-amino-acid polypeptide reads, in one-letter code: 2-deoxyglucose-6-phosphate phosphatase 2 (246 aa).

The Nucleophile role is filled by Asp-83. Asp-83 lines the Mg(2+) pocket. Residues Asp-83, Glu-92, and 146–149 contribute to the substrate site; that span reads DVKN. Asp-183 contributes to the Mg(2+) binding site.

Belongs to the HAD-like hydrolase superfamily. DOG/GPP family. It depends on Mg(2+) as a cofactor.

The catalysed reaction is 2-deoxy-D-glucose 6-phosphate + H2O = 2-deoxy-D-glucose + phosphate. Its function is as follows. Phosphatase that is active on 2-deoxy-D-glucose 6-phosphate (2-DOG-6P), but not very active on fructose-1-P. This chain is 2-deoxyglucose-6-phosphate phosphatase 2, found in Saccharomyces cerevisiae (strain ATCC 204508 / S288c) (Baker's yeast).